Here is a 313-residue protein sequence, read N- to C-terminus: Fructose-1,6-bisphosphatase class 1 (313 aa).

Glutamate 90, aspartate 111, leucine 113, and aspartate 114 together coordinate Mg(2+). Substrate contacts are provided by residues 114 to 117 (DGSS), tyrosine 222, and lysine 253. A Mg(2+)-binding site is contributed by glutamate 259.

This sequence belongs to the FBPase class 1 family. In terms of assembly, homotetramer. The cofactor is Mg(2+).

It is found in the cytoplasm. It catalyses the reaction beta-D-fructose 1,6-bisphosphate + H2O = beta-D-fructose 6-phosphate + phosphate. It functions in the pathway carbohydrate biosynthesis; gluconeogenesis. The protein is Fructose-1,6-bisphosphatase class 1 of Geotalea uraniireducens (strain Rf4) (Geobacter uraniireducens).